A 113-amino-acid chain; its full sequence is U11-theraphotoxin-Hhn1a (113 aa).

The N-terminal stretch at 1–21 (MNTVRVTFLLVFVLAVSLGQA) is a signal peptide. Residues 22–74 (DKDENRMEMQGKTEQGKSYLDFAENLLLQKLEELEAKLLEEDSEESRNSRQKR) constitute a propeptide that is removed on maturation. Cystine bridges form between Cys75–Cys90, Cys82–Cys95, and Cys89–Cys110.

This sequence belongs to the neurotoxin 14 (magi-1) family. 01 (HNTX-16) subfamily. Expressed by the venom gland.

It localises to the secreted. In terms of biological role, probable ion channel inhibitor. The protein is U11-theraphotoxin-Hhn1a of Cyriopagopus hainanus (Chinese bird spider).